Reading from the N-terminus, the 4377-residue chain is E3 ubiquitin-protein ligase HUWE1 (4377 aa).

Residues S648 and S649 each carry the phosphoserine modification. Disordered regions lie at residues 706–758 (KADG…VVGT), 978–1001 (DEKA…AGSM), and 1018–1038 (TLAP…KSKI). The span at 725–735 (ASSEDEEEEEV) shows a compositional bias: acidic residues. A compositionally biased stretch (polar residues) spans 737–756 (AMQSFNSAQQNETEPNQQVV). Position 740 is a phosphoserine (S740). S1084 bears the Phosphoserine mark. Positions 1291 to 1302 (LSKEKEGSRGEE) are enriched in basic and acidic residues. The segment at 1291-1320 (LSKEKEGSRGEEEAGQEEGGSRREPQVNQQ) is disordered. The region spanning 1316 to 1355 (QVNQQQLQQLMDMGFTREHAMEALLNTSTMEQATEYLLTH) is the UBA domain. A phosphoserine mark is found at S1368, S1370, S1382, and S1395. One can recognise a UIM domain in the interval 1370–1389 (SEEDQMMRAIAMSLGQDIPM). A disordered region spans residues 1396–1415 (PEEVACRKEEEERKAREKQE). A WWE domain is found at 1603–1680 (RAQMTKYLQS…ETGNRRPVML (78 aa)). The disordered stretch occupies residues 1690-1733 (KNSKSSNGQELEKTLEESKETDIKHKENKGNDIPLALESTNTEK). A compositionally biased stretch (basic and acidic residues) spans 1699 to 1719 (ELEKTLEESKETDIKHKENKG). S1907 carries the post-translational modification Phosphoserine. Disordered stretches follow at residues 2019–2065 (APAE…SKPL), 2262–2343 (SLFG…QEMQ), and 2355–2479 (LLER…ASPL). Polar residues predominate over residues 2022 to 2033 (ETSTTGTSQGEA). Position 2035 is a phosphothreonine (T2035). Residues 2037-2057 (EETREGKKDKEGDRTSEEGKQ) are compositionally biased toward basic and acidic residues. Composition is skewed to low complexity over residues 2262–2271 (SLFGSKSASS) and 2278–2291 (DAQG…SHQQ). A Phosphoserine modification is found at S2266. K2267 is modified (N6-acetyllysine). Composition is skewed to acidic residues over residues 2295–2306 (EPGEAEVQEEDH) and 2314–2325 (ADGDIMDGEAET). Phosphoserine is present on residues S2362, S2365, and S2391. Positions 2388 to 2398 (SNLSQASTLQA) are enriched in polar residues. A compositionally biased stretch (acidic residues) spans 2408 to 2472 (DPEDEEEHTQ…SEMELDEDYP (65 aa)). 3 positions are modified to phosphoserine: S2527, S2532, and S2535. Position 2554 is a phosphothreonine (T2554). 3 positions are modified to phosphoserine: S2584, S2595, and S2619. Residues 2704–2716 (IIDKGKEDKENRD) show a composition bias toward basic and acidic residues. Disordered regions lie at residues 2704-2970 (IIDK…GVDP), 2991-3012 (IRPP…VGNP), and 3036-3059 (QQRA…MDPV). A compositionally biased stretch (polar residues) spans 2717 to 2736 (QSAQCTVTKTNDSTEQNVSD). Positions 2738-2756 (TPMPDSYPTTPSSTDAPTS) are enriched in low complexity. Residue T2751 is modified to Phosphothreonine. Polar residues-rich tracts occupy residues 2818–2835 (AETT…TSLS), 2847–2864 (AVSS…SLAS), and 2877–2890 (AGSS…SSTP). A phosphoserine mark is found at S2826, S2833, S2835, S2861, S2887, and S2888. At T2889 the chain carries Phosphothreonine. Composition is skewed to low complexity over residues 2913 to 2932 (PPED…RDSA) and 2993 to 3007 (PPTR…SAPA). S2918 bears the Phosphoserine mark. S3116, S3117, S3122, S3127, and S3135 each carry phosphoserine. The residue at position 3149 (R3149) is an Omega-N-methylarginine. 5 disordered regions span residues 3243–3266 (PKLS…SHEN), 3352–3383 (TQQR…SSSS), 3405–3429 (GKNS…SLEA), 3471–3514 (SEVQ…TTPV), and 3539–3566 (TPTT…EGGS). Residues 3355 to 3369 (RTKETNCESDRERGS) are compositionally biased toward basic and acidic residues. A compositionally biased stretch (low complexity) spans 3370 to 3383 (KQACSPCSSQSSSS). 2 stretches are compositionally biased toward low complexity: residues 3475-3503 (TNSS…ATAP) and 3539-3552 (TPTT…TSTT). A phosphoserine mark is found at S3557, S3663, S3753, S3758, S3760, and S3761. A disordered region spans residues 3738–3759 (TRRANKKAKQTGRLGSSGLGSA). Positions 3749-3759 (GRLGSSGLGSA) are enriched in low complexity. Disordered stretches follow at residues 3782–3850 (EGQR…LPLL) and 3897–3951 (RESK…SSSL). Positions 3794–3803 (TSESSNQSET) are enriched in polar residues. Residues S3810, S3818, and S3830 each carry the phosphoserine modification. Residues 3817 to 3828 (PSPSAQDTQSIV) show a composition bias toward polar residues. T3833 carries the post-translational modification Phosphothreonine. Basic and acidic residues-rich tracts occupy residues 3836-3845 (GEKEKEEKPP) and 3897-3918 (RESK…KDEP). 2 positions are modified to phosphoserine: S3909 and S3922. Over residues 3919–3928 (PPLSPAPLTP) the composition is skewed to pro residues. 2 positions are modified to phosphothreonine: T3927 and T3930. A compositionally biased stretch (polar residues) spans 3941-3951 (EPSSMHISSSL). Residues 4041–4377 (SPEEMKNRLY…QECSEGFGLA (337 aa)) form the HECT domain. Residue Y4274 is modified to Phosphotyrosine. The active-site Glycyl thioester intermediate is C4344.

The protein belongs to the UPL family. TOM1/PTR1 subfamily. As to quaternary structure, interacts with isoform p19ARF of CDKN2A which strongly inhibits HUWE1 ubiquitin ligase activity. Interacts with MYCN, POLB and CDC6. Interacts with PA2G4. Interacts with NR1D1. Interacts with AMBRA1. Interacts with HAPSTR1. Interacts with HAPSTR2. In hepatocytes, interacts with PAQR3; the interaction promotes PPARA poylubiquitination and STUB1-mediated degradation. In terms of processing, phosphorylated on tyrosine; phosphorylation is probably required for its ability to inhibit TP53 transactivation. As to expression, widely expressed.

It is found in the cytoplasm. The protein localises to the nucleus. The protein resides in the mitochondrion. The catalysed reaction is S-ubiquitinyl-[E2 ubiquitin-conjugating enzyme]-L-cysteine + [acceptor protein]-L-lysine = [E2 ubiquitin-conjugating enzyme]-L-cysteine + N(6)-ubiquitinyl-[acceptor protein]-L-lysine.. It functions in the pathway protein modification; protein ubiquitination. Its function is as follows. E3 ubiquitin-protein ligase which mediates ubiquitination and subsequent proteasomal degradation of target proteins. Regulates apoptosis by catalyzing the polyubiquitination and degradation of MCL1. Mediates monoubiquitination of DNA polymerase beta (POLB) at 'Lys-41', 'Lys-61' and 'Lys-81', thereby playing a role in base-excision repair. Also ubiquitinates the p53/TP53 tumor suppressor and core histones including H1, H2A, H2B, H3 and H4. Ubiquitinates MFN2 to negatively regulate mitochondrial fusion in response to decreased stearoylation of TFRC. Ubiquitination of MFN2 also takes place following induction of mitophagy; AMBRA1 acts as a cofactor for HUWE1-mediated ubiquitination. Regulates neural differentiation and proliferation by catalyzing the polyubiquitination and degradation of MYCN. May regulate abundance of CDC6 after DNA damage by polyubiquitinating and targeting CDC6 to degradation. Mediates polyubiquitination of PA2G4. Acts in concert with MYCBP2 to regulate the circadian clock gene expression by promoting the lithium-induced ubiquination and degradation of NR1D1. Binds to an upstream initiator-like sequence in the preprodynorphin gene. Mediates HAPSTR1 degradation, but is also a required cofactor in the pathway by which HAPSTR1 governs stress signaling. Acts as a regulator of the JNK and NF-kappa-B signaling pathways by mediating assembly of heterotypic 'Lys-63'-/'Lys-48'-linked branched ubiquitin chains that are then recognized by TAB2: HUWE1 mediates branching of 'Lys-48'-linked chains of substrates initially modified with 'Lys-63'-linked conjugates by TRAF6. 'Lys-63'-/'Lys-48'-linked branched ubiquitin chains protect 'Lys-63'-linkages from CYLD deubiquitination. Ubiquitinates PPARA in hepatocytes. The chain is E3 ubiquitin-protein ligase HUWE1 (Huwe1) from Mus musculus (Mouse).